The chain runs to 1500 residues: Synaptonemal complex protein 2 (1500 aa).

2 positions are modified to phosphoserine: Ser-457 and Ser-458. Residue Thr-464 is modified to Phosphothreonine. Ser-487 carries the post-translational modification Phosphoserine. A Phosphothreonine modification is found at Thr-496. Ser-500, Ser-509, Ser-518, and Ser-527 each carry phosphoserine. Residues 512 to 548 (KAVSKTSESGMDYAASPKSRQSDGRKRWNNRANHNKT) form a disordered region. Phosphothreonine occurs at positions 608 and 633. Ser-646, Ser-650, and Ser-741 each carry phosphoserine. The disordered stretch occupies residues 796-820 (NPSDSMMSTRKLKEPQDGSGFSKKP). At Ser-914 the chain carries Phosphoserine. Residue Thr-916 is modified to Phosphothreonine. Disordered stretches follow at residues 940–1010 (LMDY…TSES) and 1029–1084 (KEET…SASV). The span at 948-958 (NTTKYKSRKSR) shows a compositional bias: basic residues. Positions 977 to 989 (MKNDYEVVVDGRT) are enriched in basic and acidic residues. Basic residues predominate over residues 990–1000 (RLPRRATKTKK). Residues 1059 to 1076 (PSEEQKNSSRLREGREDS) show a composition bias toward basic and acidic residues. Phosphoserine occurs at positions 1115, 1117, 1124, 1133, 1140, 1144, 1156, 1159, and 1164. Thr-1168 bears the Phosphothreonine mark. Phosphoserine occurs at positions 1183, 1213, and 1216. The interval 1208 to 1234 (YMEPESPESCDNHMQNKREGNHAASPL) is disordered. Residues 1217–1228 (CDNHMQNKREGN) are compositionally biased toward basic and acidic residues. Phosphoserine occurs at positions 1232, 1275, and 1277. Thr-1313 is modified (phosphothreonine). The stretch at 1388-1429 (LLDELEKVEKDSQTLRDLEKELVDIEEKLVQKMRAYHRCERE) forms a coiled coil.

This sequence belongs to the SYCP2 family. In terms of assembly, component of the lateral elements of synaptonemal complexes. Heterodimer with SYCP3. Interacts with SMC1A and SMC3. Interacts with TEX11. In terms of processing, phosphorylated. Detected in testis and spermatocytes (at protein level).

The protein resides in the nucleus. The protein localises to the chromosome. In terms of biological role, major component of the axial/lateral elements of synaptonemal complexes (SCS) during meiotic prophase. Plays a role in the assembly of synaptonemal complexes. Required for normal meiotic chromosome synapsis during oocyte and spermatocyte development and for normal male and female fertility. Required for insertion of SYCP3 into synaptonemal complexes. May be involved in the organization of chromatin by temporarily binding to DNA scaffold attachment regions. Requires SYCP3, but not SYCP1, in order to be incorporated into the axial/lateral elements. This chain is Synaptonemal complex protein 2 (Sycp2), found in Mus musculus (Mouse).